The sequence spans 243 residues: Segregation and condensation protein A (243 aa).

Belongs to the ScpA family. In terms of assembly, component of a cohesin-like complex composed of ScpA, ScpB and the Smc homodimer, in which ScpA and ScpB bind to the head domain of Smc. The presence of the three proteins is required for the association of the complex with DNA.

Its subcellular location is the cytoplasm. In terms of biological role, participates in chromosomal partition during cell division. May act via the formation of a condensin-like complex containing Smc and ScpB that pull DNA away from mid-cell into both cell halves. In Thermoanaerobacter pseudethanolicus (strain ATCC 33223 / 39E) (Clostridium thermohydrosulfuricum), this protein is Segregation and condensation protein A.